A 379-amino-acid chain; its full sequence is tRNA-specific 2-thiouridylase MnmA (379 aa).

Residues Ala-23–Ser-30 and Leu-49 each bind ATP. Cys-117 (nucleophile) is an active-site residue. A disulfide bond links Cys-117 and Cys-214. Gly-141 contributes to the ATP binding site. The interval Arg-163 to Gln-165 is interaction with tRNA. Cys-214 serves as the catalytic Cysteine persulfide intermediate.

The protein belongs to the MnmA/TRMU family.

Its subcellular location is the cytoplasm. It carries out the reaction S-sulfanyl-L-cysteinyl-[protein] + uridine(34) in tRNA + AH2 + ATP = 2-thiouridine(34) in tRNA + L-cysteinyl-[protein] + A + AMP + diphosphate + H(+). In terms of biological role, catalyzes the 2-thiolation of uridine at the wobble position (U34) of tRNA, leading to the formation of s(2)U34. The sequence is that of tRNA-specific 2-thiouridylase MnmA from Cereibacter sphaeroides (strain ATCC 17029 / ATH 2.4.9) (Rhodobacter sphaeroides).